The sequence spans 353 residues: Phospho-furanose lactonase (353 aa).

Residues histidine 24, histidine 26, lysine 153, histidine 186, and histidine 214 each coordinate Zn(2+). Residue lysine 153 is modified to N6-carboxylysine. Residue 244-245 (KY) coordinates substrate. Aspartate 272 contributes to the Zn(2+) binding site. Residue 275 to 278 (RILY) coordinates substrate.

Belongs to the metallo-dependent hydrolases superfamily. Phosphotriesterase family. Requires Zn(2+) as cofactor.

The catalysed reaction is a 1,4-lactone + H2O = a 4-hydroxyacid + H(+). It carries out the reaction D-xylono-1,4-lactone 5-phosphate + H2O = 5-phospho-D-xylonate + H(+). It catalyses the reaction L-arabino-1,4-lactone 5-phosphate + H2O = 5-phospho-L-arabinonate + H(+). Catalyzes the hydrolysis of D-xylono-1,4-lactone-5-phosphate and L-arabino-1,4-lactone-5-phosphate. Also able to hydrolyze carboxy 1,4-lactones. The sequence is that of Phospho-furanose lactonase from Mycoplasmopsis synoviae (strain 53) (Mycoplasma synoviae).